Here is a 283-residue protein sequence, read N- to C-terminus: Bifunctional protein FolD (283 aa).

NADP(+) is bound by residues 164–166 and S189; that span reads GRS.

The protein belongs to the tetrahydrofolate dehydrogenase/cyclohydrolase family. As to quaternary structure, homodimer.

The catalysed reaction is (6R)-5,10-methylene-5,6,7,8-tetrahydrofolate + NADP(+) = (6R)-5,10-methenyltetrahydrofolate + NADPH. It catalyses the reaction (6R)-5,10-methenyltetrahydrofolate + H2O = (6R)-10-formyltetrahydrofolate + H(+). The protein operates within one-carbon metabolism; tetrahydrofolate interconversion. Its function is as follows. Catalyzes the oxidation of 5,10-methylenetetrahydrofolate to 5,10-methenyltetrahydrofolate and then the hydrolysis of 5,10-methenyltetrahydrofolate to 10-formyltetrahydrofolate. The protein is Bifunctional protein FolD of Lactobacillus acidophilus (strain ATCC 700396 / NCK56 / N2 / NCFM).